A 354-amino-acid polypeptide reads, in one-letter code: UDP-3-O-acylglucosamine N-acyltransferase (354 aa).

H247 serves as the catalytic Proton acceptor.

Belongs to the transferase hexapeptide repeat family. LpxD subfamily. As to quaternary structure, homotrimer.

The enzyme catalyses a UDP-3-O-[(3R)-3-hydroxyacyl]-alpha-D-glucosamine + a (3R)-hydroxyacyl-[ACP] = a UDP-2-N,3-O-bis[(3R)-3-hydroxyacyl]-alpha-D-glucosamine + holo-[ACP] + H(+). The protein operates within bacterial outer membrane biogenesis; LPS lipid A biosynthesis. Catalyzes the N-acylation of UDP-3-O-acylglucosamine using 3-hydroxyacyl-ACP as the acyl donor. Is involved in the biosynthesis of lipid A, a phosphorylated glycolipid that anchors the lipopolysaccharide to the outer membrane of the cell. This is UDP-3-O-acylglucosamine N-acyltransferase from Chlamydia trachomatis serovar A (strain ATCC VR-571B / DSM 19440 / HAR-13).